The chain runs to 315 residues: DNA-directed RNA polymerase subunit alpha (315 aa).

The tract at residues 1 to 228 (MLEIEKPIIE…EHFKLFMSLT (228 aa)) is alpha N-terminal domain (alpha-NTD). Residues 245-315 (KEKVLEMTVE…LGLCLKLNDE (71 aa)) are alpha C-terminal domain (alpha-CTD).

It belongs to the RNA polymerase alpha chain family. In terms of assembly, homodimer. The RNAP catalytic core consists of 2 alpha, 1 beta, 1 beta' and 1 omega subunit. When a sigma factor is associated with the core the holoenzyme is formed, which can initiate transcription.

It carries out the reaction RNA(n) + a ribonucleoside 5'-triphosphate = RNA(n+1) + diphosphate. In terms of biological role, DNA-dependent RNA polymerase catalyzes the transcription of DNA into RNA using the four ribonucleoside triphosphates as substrates. The polypeptide is DNA-directed RNA polymerase subunit alpha (Clostridium botulinum (strain Alaska E43 / Type E3)).